A 153-amino-acid chain; its full sequence is Lipoprotein signal peptidase (153 aa).

2 helical membrane-spanning segments follow: residues 52–72 and 81–101; these read ILAGQMWFFYVITIAVIIGIV and GQMLLGISLGLMLGGAAGNFI. Catalysis depends on residues aspartate 111 and aspartate 129. The chain crosses the membrane as a helical span at residues 124 to 144; sequence IFNIADSSLCVGVILLFIHML.

It belongs to the peptidase A8 family.

The protein localises to the cell membrane. It catalyses the reaction Release of signal peptides from bacterial membrane prolipoproteins. Hydrolyzes -Xaa-Yaa-Zaa-|-(S,diacylglyceryl)Cys-, in which Xaa is hydrophobic (preferably Leu), and Yaa (Ala or Ser) and Zaa (Gly or Ala) have small, neutral side chains.. Its pathway is protein modification; lipoprotein biosynthesis (signal peptide cleavage). In terms of biological role, this protein specifically catalyzes the removal of signal peptides from prolipoproteins. This Bacillus velezensis (strain DSM 23117 / BGSC 10A6 / LMG 26770 / FZB42) (Bacillus amyloliquefaciens subsp. plantarum) protein is Lipoprotein signal peptidase.